The sequence spans 207 residues: Ribosomal RNA small subunit methyltransferase G (207 aa).

Residues Gly-73, Leu-78, 124–125 (VE), and Arg-139 contribute to the S-adenosyl-L-methionine site.

Belongs to the methyltransferase superfamily. RNA methyltransferase RsmG family.

It localises to the cytoplasm. The enzyme catalyses guanosine(527) in 16S rRNA + S-adenosyl-L-methionine = N(7)-methylguanosine(527) in 16S rRNA + S-adenosyl-L-homocysteine. In terms of biological role, specifically methylates the N7 position of guanine in position 527 of 16S rRNA. In Salmonella arizonae (strain ATCC BAA-731 / CDC346-86 / RSK2980), this protein is Ribosomal RNA small subunit methyltransferase G.